A 316-amino-acid chain; its full sequence is Beta-ketoacyl-[acyl-carrier-protein] synthase III (316 aa).

Residues Cys112 and His243 contribute to the active site. The interval 244–248 is ACP-binding; that stretch reads QANLR. Residue Asn273 is part of the active site.

This sequence belongs to the thiolase-like superfamily. FabH family. Homodimer.

The protein localises to the cytoplasm. It carries out the reaction malonyl-[ACP] + acetyl-CoA + H(+) = 3-oxobutanoyl-[ACP] + CO2 + CoA. It functions in the pathway lipid metabolism; fatty acid biosynthesis. Catalyzes the condensation reaction of fatty acid synthesis by the addition to an acyl acceptor of two carbons from malonyl-ACP. Catalyzes the first condensation reaction which initiates fatty acid synthesis and may therefore play a role in governing the total rate of fatty acid production. Possesses both acetoacetyl-ACP synthase and acetyl transacylase activities. Its substrate specificity determines the biosynthesis of branched-chain and/or straight-chain of fatty acids. This chain is Beta-ketoacyl-[acyl-carrier-protein] synthase III, found in Haemophilus influenzae (strain 86-028NP).